Reading from the N-terminus, the 155-residue chain is Ribosomal RNA large subunit methyltransferase H (155 aa).

S-adenosyl-L-methionine is bound by residues leucine 73, glycine 104, and 123 to 128 (LSPLTL).

Belongs to the RNA methyltransferase RlmH family. In terms of assembly, homodimer.

Its subcellular location is the cytoplasm. It carries out the reaction pseudouridine(1915) in 23S rRNA + S-adenosyl-L-methionine = N(3)-methylpseudouridine(1915) in 23S rRNA + S-adenosyl-L-homocysteine + H(+). Functionally, specifically methylates the pseudouridine at position 1915 (m3Psi1915) in 23S rRNA. This is Ribosomal RNA large subunit methyltransferase H from Pseudomonas putida (strain ATCC 700007 / DSM 6899 / JCM 31910 / BCRC 17059 / LMG 24140 / F1).